We begin with the raw amino-acid sequence, 238 residues long: Sugar fermentation stimulation protein homolog (238 aa).

Belongs to the SfsA family.

This chain is Sugar fermentation stimulation protein homolog, found in Haemophilus influenzae (strain PittGG).